We begin with the raw amino-acid sequence, 698 residues long: SHC SH2 domain-binding protein 1 homolog B (698 aa).

3 PbH1 repeats span residues 480 to 502 (CAELLMKYSDLYGAKGAGMEIYP), 503 to 524 (GSKCTLIGNGIHHCRDGILIKD), and 532 to 554 (IPKIIMENNVIHNNEGYAVVLVK).

It is found in the midbody. It localises to the cytoplasm. Its subcellular location is the cytoskeleton. The protein localises to the spindle. Its function is as follows. May play a role in signaling pathways governing cellular proliferation. This chain is SHC SH2 domain-binding protein 1 homolog B (shcbp1-b), found in Xenopus laevis (African clawed frog).